The chain runs to 1129 residues: ATP-dependent DNA helicase mph1 (1129 aa).

Disordered stretches follow at residues 1–101, 124–222, and 236–306; these read MTGS…FEDA, TQLT…QNEG, and DAFD…TQHK. The span at 45–63 shows a compositional bias: basic and acidic residues; it reads DGTASDVRRRPSENRESQR. 2 stretches are compositionally biased toward polar residues: residues 203–222 and 242–285; these read NTKAPTHQPITRSPTVQNEG and ISLS…QTDQ. The segment covering 297 to 306 has biased composition (basic and acidic residues); sequence QKDEPPTQHK. The Helicase ATP-binding domain maps to 331–499; sequence IAQKGLFHNL…AVIDGLDIAR (169 aa). Residue 344–351 coordinates ATP; that stretch reads LPTGLGKT. Positions 447–450 match the DEAH box motif; it reads DEAH. Residues 674–843 form the Helicase C-terminal domain; it reads VLNHFMDAGE…GSRFTFHDDI (170 aa). Disordered regions lie at residues 863–930, 1018–1060, and 1072–1129; these read IPDE…VEIP, RQGD…STED, and SVVK…DSDD. 2 stretches are compositionally biased toward basic residues: residues 877–889 and 1028–1044; these read RRGRAPKRPPKKF and SPRHERRRRLSKTKPRY. Over residues 1077-1086 the composition is skewed to polar residues; that stretch reads QKQQPFYSSQ.

It belongs to the DEAD box helicase family. DEAH subfamily. FANCM sub-subfamily. In terms of assembly, interacts with the MHF histone-fold complex to form the FANCM-MHF complex.

Its subcellular location is the nucleus. The catalysed reaction is ATP + H2O = ADP + phosphate + H(+). Its function is as follows. ATP-dependent DNA helicase involved in DNA damage repair by homologous recombination and in genome maintenance. Capable of unwinding D-loops. Plays a role in limiting crossover recombinants during mitotic DNA double-strand break (DSB) repair. Component of a FANCM-MHF complex which promotes gene conversion at blocked replication forks, probably by reversal of the stalled fork. The polypeptide is ATP-dependent DNA helicase mph1 (Aspergillus oryzae (strain ATCC 42149 / RIB 40) (Yellow koji mold)).